A 255-amino-acid chain; its full sequence is Small ribosomal subunit protein uS2 (255 aa).

The interval 230-255 (QSSSGRDLGASSEVPVEPALEEAAEG) is disordered.

Belongs to the universal ribosomal protein uS2 family.

The chain is Small ribosomal subunit protein uS2 from Rhizobium leguminosarum bv. trifolii (strain WSM2304).